We begin with the raw amino-acid sequence, 245 residues long: Probable proteasome subunit alpha type-2 (245 aa).

This sequence belongs to the peptidase T1A family. In terms of assembly, the 26S proteasome consists of a 20S proteasome core and two 19S regulatory subunits. The 20S proteasome core is composed of 28 subunits that are arranged in four stacked rings, resulting in a barrel-shaped structure. The two end rings are each formed by seven alpha subunits, and the two central rings are each formed by seven beta subunits. The catalytic chamber with the active sites is on the inside of the barrel.

It localises to the cytoplasm. Its subcellular location is the nucleus. The proteasome is a multicatalytic proteinase complex which is characterized by its ability to cleave peptides with Arg, Phe, Tyr, Leu, and Glu adjacent to the leaving group at neutral or slightly basic pH. The proteasome has an ATP-dependent proteolytic activity. The sequence is that of Probable proteasome subunit alpha type-2 (pre8) from Schizosaccharomyces pombe (strain 972 / ATCC 24843) (Fission yeast).